The chain runs to 107 residues: Nucleoid-associated protein XF_1808 (107 aa).

This sequence belongs to the YbaB/EbfC family. Homodimer.

Its subcellular location is the cytoplasm. The protein localises to the nucleoid. Binds to DNA and alters its conformation. May be involved in regulation of gene expression, nucleoid organization and DNA protection. In Xylella fastidiosa (strain 9a5c), this protein is Nucleoid-associated protein XF_1808.